The chain runs to 415 residues: Phosphoribosylamine--glycine ligase (415 aa).

An ATP-grasp domain is found at 108–311; that stretch reads KKIMEKYNIP…LMQHIIDLDE (204 aa). ATP is bound at residue 134–191; that stretch reads IENCELPVVVKKDGLAAGKGVIIADTIEAARSAIEIMYGDEEEGTVVFETFLEGEEFS. Glu281 and Asn283 together coordinate Mg(2+).

The protein belongs to the GARS family. It depends on Mg(2+) as a cofactor. Mn(2+) is required as a cofactor.

It carries out the reaction 5-phospho-beta-D-ribosylamine + glycine + ATP = N(1)-(5-phospho-beta-D-ribosyl)glycinamide + ADP + phosphate + H(+). It functions in the pathway purine metabolism; IMP biosynthesis via de novo pathway; N(1)-(5-phospho-D-ribosyl)glycinamide from 5-phospho-alpha-D-ribose 1-diphosphate: step 2/2. The polypeptide is Phosphoribosylamine--glycine ligase (Staphylococcus aureus (strain MW2)).